The following is a 302-amino-acid chain: Recombination-associated protein RdgC (302 aa).

The protein belongs to the RdgC family.

Its subcellular location is the cytoplasm. It localises to the nucleoid. May be involved in recombination. The polypeptide is Recombination-associated protein RdgC (Actinobacillus pleuropneumoniae serotype 7 (strain AP76)).